The primary structure comprises 504 residues: Anaerobic nitric oxide reductase transcription regulator NorR (504 aa).

The residue at position 57 (aspartate 57) is a 4-aspartylphosphate. Positions 187–416 constitute a Sigma-54 factor interaction domain; the sequence is MIGLSPGMTQ…LEHAIHRAVV (230 aa). ATP-binding positions include 215-222 and 278-287; these read GETGTGKE and ADNGTLFLDE. A DNA-binding region (H-T-H motif) is located at residues 479-498; it reads WAASARMLETDVANLHRLAK.

The protein operates within nitrogen metabolism; nitric oxide reduction. In terms of biological role, required for the expression of anaerobic nitric oxide (NO) reductase, acts as a transcriptional activator for at least the norVW operon. Activation also requires sigma-54. The protein is Anaerobic nitric oxide reductase transcription regulator NorR of Escherichia coli O7:K1 (strain IAI39 / ExPEC).